A 316-amino-acid polypeptide reads, in one-letter code: Probable porphobilinogen deaminase (316 aa).

Residue Cys234 is modified to S-(dipyrrolylmethanemethyl)cysteine.

Belongs to the HMBS family. Dipyrromethane is required as a cofactor.

It carries out the reaction 4 porphobilinogen + H2O = hydroxymethylbilane + 4 NH4(+). Its pathway is porphyrin-containing compound metabolism; protoporphyrin-IX biosynthesis; coproporphyrinogen-III from 5-aminolevulinate: step 2/4. Tetrapolymerization of the monopyrrole PBG into the hydroxymethylbilane pre-uroporphyrinogen in several discrete steps. The sequence is that of Probable porphobilinogen deaminase from Methanosarcina mazei (strain ATCC BAA-159 / DSM 3647 / Goe1 / Go1 / JCM 11833 / OCM 88) (Methanosarcina frisia).